Consider the following 172-residue polypeptide: Small ribosomal subunit protein uS5 (172 aa).

Residues 17 to 80 (LREKMIAVNR…DEARRKMIKV (64 aa)) enclose the S5 DRBM domain.

Belongs to the universal ribosomal protein uS5 family. In terms of assembly, part of the 30S ribosomal subunit. Contacts proteins S4 and S8.

Functionally, with S4 and S12 plays an important role in translational accuracy. Located at the back of the 30S subunit body where it stabilizes the conformation of the head with respect to the body. This chain is Small ribosomal subunit protein uS5, found in Polynucleobacter asymbioticus (strain DSM 18221 / CIP 109841 / QLW-P1DMWA-1) (Polynucleobacter necessarius subsp. asymbioticus).